Reading from the N-terminus, the 261-residue chain is tRNA pseudouridine synthase A (261 aa).

Asp-51 acts as the Nucleophile in catalysis. Tyr-109 contributes to the substrate binding site.

Belongs to the tRNA pseudouridine synthase TruA family. Homodimer.

It catalyses the reaction uridine(38/39/40) in tRNA = pseudouridine(38/39/40) in tRNA. In terms of biological role, formation of pseudouridine at positions 38, 39 and 40 in the anticodon stem and loop of transfer RNAs. This is tRNA pseudouridine synthase A from Shewanella sp. (strain W3-18-1).